The following is a 227-amino-acid chain: Cytochrome c oxidase subunit 2 (227 aa).

The Mitochondrial intermembrane segment spans residues 1 to 14; that stretch reads MAYPMQLGFQDATS. A helical membrane pass occupies residues 15–45; that stretch reads PIMEELLHFHDHTLMIVFLISSLVLYVISLM. The Mitochondrial matrix segment spans residues 46 to 59; sequence LTTKLTHTSTMDAQ. Residues 60–87 traverse the membrane as a helical segment; that stretch reads EVETIWTILPAIILILIALPSLRILYMM. The Mitochondrial intermembrane segment spans residues 88–227; the sequence is DEINNPSLTV…YFEKWSASML (140 aa). H161, C196, E198, C200, H204, and M207 together coordinate Cu cation. Residue E198 participates in Mg(2+) binding.

It belongs to the cytochrome c oxidase subunit 2 family. As to quaternary structure, component of the cytochrome c oxidase (complex IV, CIV), a multisubunit enzyme composed of 14 subunits. The complex is composed of a catalytic core of 3 subunits MT-CO1, MT-CO2 and MT-CO3, encoded in the mitochondrial DNA, and 11 supernumerary subunits COX4I, COX5A, COX5B, COX6A, COX6B, COX6C, COX7A, COX7B, COX7C, COX8 and NDUFA4, which are encoded in the nuclear genome. The complex exists as a monomer or a dimer and forms supercomplexes (SCs) in the inner mitochondrial membrane with NADH-ubiquinone oxidoreductase (complex I, CI) and ubiquinol-cytochrome c oxidoreductase (cytochrome b-c1 complex, complex III, CIII), resulting in different assemblies (supercomplex SCI(1)III(2)IV(1) and megacomplex MCI(2)III(2)IV(2)). Found in a complex with TMEM177, COA6, COX18, COX20, SCO1 and SCO2. Interacts with TMEM177 in a COX20-dependent manner. Interacts with COX20. Interacts with COX16. It depends on Cu cation as a cofactor.

The protein resides in the mitochondrion inner membrane. The enzyme catalyses 4 Fe(II)-[cytochrome c] + O2 + 8 H(+)(in) = 4 Fe(III)-[cytochrome c] + 2 H2O + 4 H(+)(out). Component of the cytochrome c oxidase, the last enzyme in the mitochondrial electron transport chain which drives oxidative phosphorylation. The respiratory chain contains 3 multisubunit complexes succinate dehydrogenase (complex II, CII), ubiquinol-cytochrome c oxidoreductase (cytochrome b-c1 complex, complex III, CIII) and cytochrome c oxidase (complex IV, CIV), that cooperate to transfer electrons derived from NADH and succinate to molecular oxygen, creating an electrochemical gradient over the inner membrane that drives transmembrane transport and the ATP synthase. Cytochrome c oxidase is the component of the respiratory chain that catalyzes the reduction of oxygen to water. Electrons originating from reduced cytochrome c in the intermembrane space (IMS) are transferred via the dinuclear copper A center (CU(A)) of subunit 2 and heme A of subunit 1 to the active site in subunit 1, a binuclear center (BNC) formed by heme A3 and copper B (CU(B)). The BNC reduces molecular oxygen to 2 water molecules using 4 electrons from cytochrome c in the IMS and 4 protons from the mitochondrial matrix. This is Cytochrome c oxidase subunit 2 (MT-CO2) from Gazella spekei (Speke's gazelle).